We begin with the raw amino-acid sequence, 196 residues long: MLERIKDSFTESIQTKIDAAEALPESIEKAAEMMVQCLLGGKKILACGNGGSAGDAQHFSAELLNRYEIERPPLPAIALSTDTSTITAIANDYSYDEIFSKQIFALGQPGDILLAISTSGNSGNIIKAMEAALSRDMTIVALTGKDGGAMAGLMSAGDVEIRVPSNVTARIQEVHLLVIHCLCDNIDRTLFPQDEA.

Positions 34-196 constitute an SIS domain; it reads MVQCLLGGKK…DRTLFPQDEA (163 aa). A substrate-binding site is contributed by 49-51; sequence NGG. Zn(2+)-binding residues include H58 and E62. Residues E62, 91–92, 117–119, S122, and Q172 each bind substrate; these read ND and STS. Zn(2+) is bound by residues Q172 and H180.

The protein belongs to the SIS family. GmhA subfamily. As to quaternary structure, homotetramer. It depends on Zn(2+) as a cofactor.

Its subcellular location is the cytoplasm. It catalyses the reaction 2 D-sedoheptulose 7-phosphate = D-glycero-alpha-D-manno-heptose 7-phosphate + D-glycero-beta-D-manno-heptose 7-phosphate. It participates in carbohydrate biosynthesis; D-glycero-D-manno-heptose 7-phosphate biosynthesis; D-glycero-alpha-D-manno-heptose 7-phosphate and D-glycero-beta-D-manno-heptose 7-phosphate from sedoheptulose 7-phosphate: step 1/1. Catalyzes the isomerization of sedoheptulose 7-phosphate in D-glycero-D-manno-heptose 7-phosphate. This Shewanella denitrificans (strain OS217 / ATCC BAA-1090 / DSM 15013) protein is Phosphoheptose isomerase.